The sequence spans 323 residues: Probable cell division protein WhiA (323 aa).

Positions 275–309 (TLKELGEMLTTGQVSKSGINHRLRKLDQIAERLRS) form a DNA-binding region, H-T-H motif.

This sequence belongs to the WhiA family.

In terms of biological role, involved in cell division and chromosome segregation. The sequence is that of Probable cell division protein WhiA from Listeria monocytogenes serotype 4b (strain CLIP80459).